Reading from the N-terminus, the 536-residue chain is Arylsulfatase K (536 aa).

The signal sequence occupies residues 1-22; sequence MLLLWVSVVAALALAVLAPGAG. The Ca(2+) site is built by Asp-40 and Cys-80. Residue Cys-80 is the Nucleophile of the active site. A 3-oxoalanine (Cys) modification is found at Cys-80. Asn-108 carries N-linked (GlcNAc...) asparagine glycosylation. Lys-128 contributes to the substrate binding site. 2 N-linked (GlcNAc...) asparagine glycosylation sites follow: Asn-166 and Asn-193. A substrate-binding site is contributed by His-251. An N-linked (GlcNAc...) asparagine glycan is attached at Asn-262. Ca(2+) is bound by residues Asp-313 and His-314. 3 N-linked (GlcNAc...) asparagine glycosylation sites follow: Asn-375, Asn-413, and Asn-498.

The protein belongs to the sulfatase family. Ca(2+) serves as cofactor. Post-translationally, the conversion to 3-oxoalanine (also known as C-formylglycine, FGly), of a serine or cysteine residue in prokaryotes and of a cysteine residue in eukaryotes, is critical for catalytic activity. The 75-kDa precursor undergoes proteolytic processing to yield a 23 kDa form. In terms of processing, N-glycosylated with both high mannose and complex type sugars. As to expression, expressed at high levels in the placenta and pancreas. Expressed at intermediate levels in the lung, brain, heart, liver and kidney and at low levels in the muscle.

The protein localises to the secreted. Its subcellular location is the lysosome. It catalyses the reaction an aryl sulfate + H2O = a phenol + sulfate + H(+). The enzyme catalyses Hydrolysis of the 2-sulfate groups of the 2-O-sulfo-D-glucuronate residues of chondroitin sulfate, heparin and heparitin sulfate.. Functionally, catalyzes the hydrolysis of pseudosubstrates such as p-nitrocatechol sulfate and p-nitrophenyl sulfate. Catalyzes the hydrolysis of the 2-sulfate groups of the 2-O-sulfo-D-glucuronate residues of chondroitin sulfate, heparin and heparitin sulfate. Acts selectively on 2-sulfoglucuronate and lacks activity against 2-sulfoiduronate. This chain is Arylsulfatase K (ARSK), found in Homo sapiens (Human).